The sequence spans 392 residues: Chorismate synthase (392 aa).

Residues R40 and R46 each coordinate NADP(+). Residues 135 to 137, 256 to 257, G300, 315 to 319, and R341 each bind FMN; these read RAS, QA, and KPISS.

Belongs to the chorismate synthase family. In terms of assembly, homotetramer. It depends on FMNH2 as a cofactor.

The enzyme catalyses 5-O-(1-carboxyvinyl)-3-phosphoshikimate = chorismate + phosphate. Its pathway is metabolic intermediate biosynthesis; chorismate biosynthesis; chorismate from D-erythrose 4-phosphate and phosphoenolpyruvate: step 7/7. Its function is as follows. Catalyzes the anti-1,4-elimination of the C-3 phosphate and the C-6 proR hydrogen from 5-enolpyruvylshikimate-3-phosphate (EPSP) to yield chorismate, which is the branch point compound that serves as the starting substrate for the three terminal pathways of aromatic amino acid biosynthesis. This reaction introduces a second double bond into the aromatic ring system. The chain is Chorismate synthase from Salinispora tropica (strain ATCC BAA-916 / DSM 44818 / JCM 13857 / NBRC 105044 / CNB-440).